A 191-amino-acid chain; its full sequence is Protein YceI (191 aa).

An N-terminal signal peptide occupies residues 1 to 22; it reads MKKNLLGFTLASLLFTTGSAVA.

This sequence belongs to the UPF0312 family. Type 1 subfamily.

Its subcellular location is the periplasm. This chain is Protein YceI, found in Salmonella newport (strain SL254).